A 271-amino-acid polypeptide reads, in one-letter code: Regulatory protein RecX (271 aa).

Belongs to the RecX family.

Its subcellular location is the cytoplasm. In terms of biological role, modulates RecA activity. The chain is Regulatory protein RecX from Geobacillus sp. (strain WCH70).